Reading from the N-terminus, the 217-residue chain is Large ribosomal subunit protein uL4 (217 aa).

Residues 42–100 form a disordered region; that stretch reads RAAARQGTHSTKTRGDVSGGGRKPYRQKGTGRARQGSTRAPQFTGGGVVHGPKPRDYSQ.

The protein belongs to the universal ribosomal protein uL4 family. Part of the 50S ribosomal subunit.

Functionally, one of the primary rRNA binding proteins, this protein initially binds near the 5'-end of the 23S rRNA. It is important during the early stages of 50S assembly. It makes multiple contacts with different domains of the 23S rRNA in the assembled 50S subunit and ribosome. Its function is as follows. Forms part of the polypeptide exit tunnel. The protein is Large ribosomal subunit protein uL4 of Mycolicibacterium paratuberculosis (strain ATCC BAA-968 / K-10) (Mycobacterium paratuberculosis).